Here is a 348-residue protein sequence, read N- to C-terminus: MGEASRQQRAWNREMTVTTNLSLDIDKYPRDLLRGFMSENGGGRVFHGGETNCDDESTIELNLGLSLGGRFGVDKTPRKLKRSSSVLDTVPFNDSTVAEPENYTVGLERTTSLPAEMEEEWRKRKEMQSLRRMEAKRRRCEKQSFRVGNSDDQTVSFENERWVTASKSGFLQRHLVSSNRQVCGVDSDGGGATGGGSSSSLSELDNKNQQGSSNSCNDERSPKIVAGCSSNSGSQGTERPSVTRANKVNENENEKRVRSEDSVDRKGKGMATSTGLVDMPCVFTKGDGPNGRRVDGILYKYGKGEEVRIMCICHGSFLTPAEFVKHGGGGDVDRPLRHIVVNTSSSTF.

The disordered stretch occupies residues 186 to 272; it reads DSDGGGATGG…VDRKGKGMAT (87 aa). A compositionally biased stretch (gly residues) spans 187–197; sequence SDGGGATGGGS. Polar residues-rich tracts occupy residues 207-216 and 228-244; these read KNQQGSSNSC and CSSNSGSQGTERPSVTR. Residues 247-267 show a composition bias toward basic and acidic residues; it reads KVNENENEKRVRSEDSVDRKG.

Belongs to the Ninja family. Forms a homodimer and heterodimer with AFP1 and AFP3. Interacts with ABI5/DPBF1, DPBF2, AREB3/DPBF3, EEL/DPBF4, ABF1, ABF3/DPBF5 and ABF4/AREB2.

It is found in the nucleus. In terms of biological role, acts as a negative regulator of abscisic acid (ABA) response during germination through the ubiquitin-mediated proteolysis of ABI5/DPBF1. This chain is Ninja-family protein AFP2 (AFP2), found in Arabidopsis thaliana (Mouse-ear cress).